Consider the following 511-residue polypeptide: MKENHLLNLKVMRLSKPNIPTINPILCEKQDLPYETMSTSIDSTSLSMGSVNSSGSNDNNQLIGNNGNPINMEGLGVTSMLQLQSGVIYLGEMFCCYISLNNHSPYQVRNVFLKVELQTTSSRIPLLDSEQQSVPTFNPGFSSDFVVQREVKESGVNILVCAVNYTTPEGEQKKFRKYFKFQVLNPLVLKTRIHNLPNVVFLEACLENATQGSLFIESILFEPIEHFNSKDISFENSLDDNNNLDNNNNNLENDNNLNNLEFKLNEKGLIENTDELLENIKLTTSDNIVFLKQGCSRQYLFQITPKDIENVESKNSLPLGRLDITWRSYFGEIGRLKTAAIQRKLNQEDIECSLINIPDKIKLEKPFSVIAKLSNKSNRILYPQFMLVRNKMDGIKINSHLPKLDPIQPNSIIQVEIEMFPLKPGMQQIIGLAIKLLDPPVIGITPTTSSSQQQQPISKPTLGQVLQQTQQSQIQQQQQQQNQQLQPPKNFYEFNAVDTWVEFADSKLVDI.

The protein belongs to the TRAPPC13 family.

This Dictyostelium discoideum (Social amoeba) protein is Trafficking protein particle complex subunit 13 homolog.